A 558-amino-acid chain; its full sequence is Rhamnogalacturonase B (558 aa).

A signal peptide spans 1-21 (MLLDKLSVLSFLGLAPIFAAA). Cysteine 42 and cysteine 68 form a disulfide bridge. N-linked (GlcNAc...) asparagine glycosylation is present at asparagine 145. Aspartate 219 functions as the Proton donor in the catalytic mechanism. A disulfide bond links cysteine 221 and cysteine 238. N-linked (GlcNAc...) asparagine glycans are attached at residues asparagine 239 and asparagine 254. Histidine 294 is a catalytic residue. An N-linked (GlcNAc...) asparagine glycan is attached at asparagine 321. 2 cysteine pairs are disulfide-bonded: cysteine 344-cysteine 350 and cysteine 372-cysteine 381. Low complexity predominate over residues 503–526 (VGAQEGSTTSAPSFAAPSGAGNSP). The interval 503–558 (VGAQEGSTTSAPSFAAPSGAGNSPQGPTGASGFGEKGQQGEQGEQGEQGEQGVCYV) is disordered.

This sequence belongs to the glycosyl hydrolase 28 family.

Its subcellular location is the secreted. It catalyses the reaction Endohydrolysis of alpha-D-GalA-(1-&gt;2)-alpha-L-Rha glycosidic bond in the rhamnogalacturonan I backbone with initial inversion of anomeric configuration releasing oligosaccharides with beta-D-GalA at the reducing end.. In terms of biological role, pectinolytic enzymes consist of four classes of enzymes: pectine lyase, polygalacturonase, pectin methylesterase and rhamnogalacturonase. Hydrolyzes alpha-D-galacturonopyranosyl-(1,2)-alpha-L-rhamnopyranosyl linkages in the backbone of the hairy regions of pectins. This Aspergillus niger protein is Rhamnogalacturonase B (rhgB).